A 166-amino-acid polypeptide reads, in one-letter code: Interleukin-2 (166 aa).

An N-terminal signal peptide occupies residues 1–20 (MYSMQLASCVTLTLVLLVNS). Thr23 carries O-linked (GalNAc...) threonine glycosylation. A disulfide bridge links Cys89 with Cys137.

This sequence belongs to the IL-2 family.

The protein resides in the secreted. Functionally, cytokine produced by activated CD4-positive helper T-cells and to a lesser extend activated CD8-positive T-cells and natural killer (NK) cells that plays pivotal roles in the immune response and tolerance. Binds to a receptor complex composed of either the high-affinity trimeric IL-2R (IL2RA/CD25, IL2RB/CD122 and IL2RG/CD132) or the low-affinity dimeric IL-2R (IL2RB and IL2RG). Interaction with the receptor leads to oligomerization and conformation changes in the IL-2R subunits resulting in downstream signaling starting with phosphorylation of JAK1 and JAK3. In turn, JAK1 and JAK3 phosphorylate the receptor to form a docking site leading to the phosphorylation of several substrates including STAT5. This process leads to activation of several pathways including STAT, phosphoinositide-3-kinase/PI3K and mitogen-activated protein kinase/MAPK pathways. Functions as a T-cell growth factor and can increase NK-cell cytolytic activity as well. Promotes strong proliferation of activated B-cells and subsequently immunoglobulin production. Plays a pivotal role in regulating the adaptive immune system by controlling the survival and proliferation of regulatory T-cells, which are required for the maintenance of immune tolerance. Moreover, participates in the differentiation and homeostasis of effector T-cell subsets, including Th1, Th2, Th17 as well as memory CD8-positive T-cells. This is Interleukin-2 (Il2) from Mus spretus (Western Mediterranean mouse).